The sequence spans 958 residues: Protein translocase subunit SecA (958 aa).

Residues glutamine 86, 104 to 108, and aspartate 494 each bind ATP; that span reads GEGKT. 2 disordered regions span residues 863–883 and 902–937; these read AAAT…AEKT and QPIS…GTGK. Residues cysteine 941, cysteine 943, cysteine 952, and histidine 953 each contribute to the Zn(2+) site.

It belongs to the SecA family. In terms of assembly, monomer and homodimer. Part of the essential Sec protein translocation apparatus which comprises SecA, SecYEG and auxiliary proteins SecDF. Other proteins may also be involved. Zn(2+) serves as cofactor.

Its subcellular location is the cell membrane. It localises to the cytoplasm. The catalysed reaction is ATP + H2O + cellular proteinSide 1 = ADP + phosphate + cellular proteinSide 2.. Its function is as follows. Part of the Sec protein translocase complex. Interacts with the SecYEG preprotein conducting channel. Has a central role in coupling the hydrolysis of ATP to the transfer of proteins into and across the cell membrane, serving as an ATP-driven molecular motor driving the stepwise translocation of polypeptide chains across the membrane. In Bifidobacterium adolescentis (strain ATCC 15703 / DSM 20083 / NCTC 11814 / E194a), this protein is Protein translocase subunit SecA.